The primary structure comprises 512 residues: MHTVVVGTSGVTASDVLAVARAGARIELSEEAVAALAAARSVVDALAAKPDPVYGVSTGFGALATRHISPELRGRLQRNIVRSHAAGMGPRVEREVVRALMFLRLKTVCSGRTGVRPEVAQTMADVLNAGITPVVHEYGSLGCSGDLAPLSHCALTLMGEGDAEGPDGTVRPAGELLAAHGIAPVELREKEGLALLNGTDGMLGMLVMALADLDTLYKSADITAALTMEALLGTDRVLAPELHAIRPHPGQAASAANMAAVLKGSGLTGHHQDDAPRVQDAYSVRCAPQVAGAGRDTMAHAGLVAERELAAAVDNPVVLPDGRVESNGNFHGAPVAYVLDFLAVAVADLGSIAERRTDRLLDKNRSHGLPPFLADDAGVDSGLMIAQYTQAALVGELKRLAVPASADSIPSSAMQEDHVSMGWSAARKLRTAVDNLARVIAVELYAATRAIQLREGLTPAPASQAVVEAVRAAGVEGPGPDRHLAPDLAAADAFVRAGHLVAAAESVTGPLR.

The 5-imidazolinone (Cys-Gly) cross-link spans 143–145; the sequence is CSG. Serine 144 carries the post-translational modification 2,3-didehydroalanine (Ser).

This sequence belongs to the PAL/histidase family. Post-translationally, contains an active site 4-methylidene-imidazol-5-one (MIO), which is formed autocatalytically by cyclization and dehydration of residues Cys-Ser-Gly.

The protein resides in the cytoplasm. The catalysed reaction is L-histidine = trans-urocanate + NH4(+). It participates in amino-acid degradation; L-histidine degradation into L-glutamate; N-formimidoyl-L-glutamate from L-histidine: step 1/3. This Streptomyces coelicolor (strain ATCC BAA-471 / A3(2) / M145) protein is Histidine ammonia-lyase.